The following is a 437-amino-acid chain: Na(+)/H(+) antiporter NhaA (437 aa).

A run of 11 helical transmembrane segments spans residues 12-32, 65-85, 103-123, 133-153, 162-182, 186-206, 214-234, 308-328, 333-353, 377-397, and 412-432; these read SMNI…AVIA, LTMI…MVGL, ALPF…YSMV, GLAI…SLLG, IFLT…IAIF, HVAY…YFIG, IFFL…GIHS, GAVN…VMFS, VIGG…FLGI, ISGV…IANL, and LGVL…LHWV.

Belongs to the NhaA Na(+)/H(+) (TC 2.A.33) antiporter family.

Its subcellular location is the cell inner membrane. It carries out the reaction Na(+)(in) + 2 H(+)(out) = Na(+)(out) + 2 H(+)(in). Na(+)/H(+) antiporter that extrudes sodium in exchange for external protons. The sequence is that of Na(+)/H(+) antiporter NhaA from Bacteroides fragilis (strain YCH46).